Consider the following 248-residue polypeptide: METTTPQSKSSVSHRPPLGREDWWSEEATATLVEAWGNRYVKLNHGNLRQNDWKDVADAVNSRHGDNSRKKTDLQCKNRVDTLKKKYKTEKAKLSPSTWRFYNRLDVLIGPVVKKSAGGVVKSAPFKNHLNPTGSNSTGSSLEDDDEDDDEVGDWEFVARKHPRVEEVDLSEGSTCRELATAILKFGEVYERIEGKKQQMMIELEKQRMEVTKEVELKRMNMLMEMQLEIEKSKHRKRASASGKKNSH.

Residues 1–13 (METTTPQSKSSVS) are compositionally biased toward polar residues. Residues 1-20 (METTTPQSKSSVSHRPPLGR) form a disordered region. The MADF DNA-binding region spans 24–113 (WSEEATATLV…RLDVLIGPVV (90 aa)). The Nuclear localization signal signature appears at 69-76 (RKKTDLQC). The disordered stretch occupies residues 123–150 (SAPFKNHLNPTGSNSTGSSLEDDDEDDD). Positions 130–141 (LNPTGSNSTGSS) are enriched in polar residues. Positions 190-210 (YERIEGKKQQMMIELEKQRME) form a coiled coil.

Interacts with the Agrobacterium tumefaciens virulence protein F (VirF) in the nucleus. Binds to EIN2 C-terminal region in the presence of ethylene.

Its subcellular location is the nucleus. The protein resides in the nucleoplasm. In terms of biological role, probable transcription regulator. Promotes histone acetylation during ethylene signaling in an EIN2-dependent manner, thus regulating positively ethylene-responsive genes. This Arabidopsis thaliana (Mouse-ear cress) protein is Trihelix transcription factor ENAP2.